Reading from the N-terminus, the 448-residue chain is Phosphoglucosamine mutase (448 aa).

The Phosphoserine intermediate role is filled by Ser-100. Ser-100, Asp-240, Asp-242, and Asp-244 together coordinate Mg(2+). Phosphoserine is present on Ser-100.

Belongs to the phosphohexose mutase family. The cofactor is Mg(2+). In terms of processing, activated by phosphorylation.

The enzyme catalyses alpha-D-glucosamine 1-phosphate = D-glucosamine 6-phosphate. Its function is as follows. Catalyzes the conversion of glucosamine-6-phosphate to glucosamine-1-phosphate. The chain is Phosphoglucosamine mutase from Bacillus anthracis (strain A0248).